The chain runs to 847 residues: Aryl hydrocarbon receptor (847 aa).

The tract at residues 1-39 (MNGGGANITYASRKRRKPVQKTVKPIPAEGIKSNPSKRH) is disordered. 2 consecutive short sequence motifs (nuclear localization signal) follow at residues 13–16 (RKRR) and 37–42 (KRHRDR). Residues 27-80 (PAEGIKSNPSKRHRDRLNTELDRLASLLPFPQDVINKLDKLSVLRLSVSYLRAK) enclose the bHLH domain. Residues 38–66 (RHRDRLNTELDRLASLLPFPQDVINKLDK) are DNA-binding. 3 required for maintaining the overall integrity of the AHR:ARNT heterodimer and its transcriptional activity regions span residues 50–82 (LASLLPFPQDVINKLDKLSVLRLSVSYLRAKSF), 117–125 (LLQALNGFV), and 264–266 (FAI). A Nuclear export signal motif is present at residues 64–72 (LDKLSVLRL). Positions 120–173 (ALNGFVLVVTVDALVFYASSTIQDYLGFQQSDVIHQSVYELIHTEDRAEFQRQL) constitute a PAS 1 domain. The PAS 2 domain occupies 281 to 336 (KNFIFRTKHKLDFTPTGCDAKGQIVLGYTEAELCMRGSGYQFIHAADMLYCAESHI). The PAC domain occupies 346–384 (LAVFRLLTKDNRWAWVQSNARFIYKNGRPDFIIATQRPL). Disordered stretches follow at residues 430 to 452 (KSGTCGKDSATKPTPSKDSVHPS) and 825 to 847 (HLPPLHHPSEARPFPDLASGRLL). Over residues 440 to 452 (TKPTPSKDSVHPS) the composition is skewed to polar residues.

Homodimer. Heterodimer; efficient DNA binding requires dimerization with another bHLH protein. Binds MYBBP1A. Interacts with coactivators including SRC-1, RIP140 and NOCA7, and with the corepressor SMRT. Interacts with NEDD8 and IVNS1ABP. Interacts with BMAL1. Interacts with HSP90AB1. Interacts with ARNT; the heterodimer ARNT:AHR binds to core DNA sequence 5'-TGCGTG-3' within the dioxin response element (DRE) of target gene promoters and activates their transcription. Interacts with TIPARP; leading to mono-ADP-ribosylation of AHR and subsequent inhibition of AHR. Post-translationally, mono-ADP-ribosylated, leading to inhibit transcription activator activity of AHR.

It is found in the cytoplasm. The protein resides in the nucleus. Its function is as follows. Ligand-activated transcription factor that enables cells to adapt to changing conditions by sensing compounds from the environment, diet, microbiome and cellular metabolism, and which plays important roles in development, immunity and cancer. Upon ligand binding, translocates into the nucleus, where it heterodimerizes with ARNT and induces transcription by binding to xenobiotic response elements (XRE). Regulates a variety of biological processes, including angiogenesis, hematopoiesis, drug and lipid metabolism, cell motility and immune modulation. Xenobiotics can act as ligands: upon xenobiotic-binding, activates the expression of multiple phase I and II xenobiotic chemical metabolizing enzyme genes (such as the CYP1A1 gene). Mediates biochemical and toxic effects of halogenated aromatic hydrocarbons. Next to xenobiotics, natural ligands derived from plants, microbiota, and endogenous metabolism are potent AHR agonists. Tryptophan (Trp) derivatives constitute an important class of endogenous AHR ligands. Acts as a negative regulator of anti-tumor immunity: indoles and kynurenic acid generated by Trp catabolism act as ligand and activate AHR, thereby promoting AHR-driven cancer cell motility and suppressing adaptive immunity. Regulates the circadian clock by inhibiting the basal and circadian expression of the core circadian component PER1. Inhibits PER1 by repressing the CLOCK-BMAL1 heterodimer mediated transcriptional activation of PER1. The heterodimer ARNT:AHR binds to core DNA sequence 5'-TGCGTG-3' within the dioxin response element (DRE) of target gene promoters and activates their transcription. The sequence is that of Aryl hydrocarbon receptor (AHR) from Oryctolagus cuniculus (Rabbit).